Reading from the N-terminus, the 640-residue chain is Threonine--tRNA ligase (640 aa).

A TGS domain is found at 1–61 (MPTITLPDGS…ENDASLQIIT (61 aa)). Residues 242–533 (DHRKIGKRLG…LIEHYEGAFP (292 aa)) are catalytic. Zn(2+) is bound by residues Cys-333, His-384, and His-510.

It belongs to the class-II aminoacyl-tRNA synthetase family. As to quaternary structure, homodimer. Zn(2+) serves as cofactor.

Its subcellular location is the cytoplasm. The catalysed reaction is tRNA(Thr) + L-threonine + ATP = L-threonyl-tRNA(Thr) + AMP + diphosphate + H(+). Its function is as follows. Catalyzes the attachment of threonine to tRNA(Thr) in a two-step reaction: L-threonine is first activated by ATP to form Thr-AMP and then transferred to the acceptor end of tRNA(Thr). Also edits incorrectly charged L-seryl-tRNA(Thr). This Pseudomonas syringae pv. tomato (strain ATCC BAA-871 / DC3000) protein is Threonine--tRNA ligase.